The primary structure comprises 265 residues: Beta-lactamase SHV-4 (265 aa).

Serine 45 serves as the catalytic Acyl-ester intermediate. A disulfide bridge connects residues cysteine 52 and cysteine 98. Catalysis depends on glutamate 143, which acts as the Proton acceptor. Lysine 209–glycine 211 serves as a coordination point for substrate.

It belongs to the class-A beta-lactamase family.

It catalyses the reaction a beta-lactam + H2O = a substituted beta-amino acid. In terms of biological role, SHV enzymes hydrolyze broad spectrum cephalosporins notably cefotaxime and ceftazidime. SHV-4 causes particularly high levels of resistance to aztreonam and ceftazidime. In Klebsiella pneumoniae, this protein is Beta-lactamase SHV-4 (bla).